Consider the following 693-residue polypeptide: Elongation factor G (693 aa).

In terms of domain architecture, tr-type G spans 8–282 (EKTRNIGIMA…AVIDYLPSPL (275 aa)). Residues 17–24 (AHIDAGKT), 81–85 (DTPGH), and 135–138 (NKMD) each bind GTP.

The protein belongs to the TRAFAC class translation factor GTPase superfamily. Classic translation factor GTPase family. EF-G/EF-2 subfamily.

The protein resides in the cytoplasm. In terms of biological role, catalyzes the GTP-dependent ribosomal translocation step during translation elongation. During this step, the ribosome changes from the pre-translocational (PRE) to the post-translocational (POST) state as the newly formed A-site-bound peptidyl-tRNA and P-site-bound deacylated tRNA move to the P and E sites, respectively. Catalyzes the coordinated movement of the two tRNA molecules, the mRNA and conformational changes in the ribosome. This Staphylococcus aureus (strain Mu3 / ATCC 700698) protein is Elongation factor G.